A 287-amino-acid chain; its full sequence is MATSTLPQVPYKVGVVGYGRLGQSLVSRLLAQGSELGLELVFVWNRDPGRMAGSVPPALQLQDLTALEERHPDLVVEVAHPKIIHESGAQILRHANLLVGSPSALADQTTEQQLLEASKRWGHTVFVARGALWGSEDISRLDAAGGLQSLRVTMATHPDGFRLEGPLAAAHSSGPRTVLYEGPVRGLCPLAPRNSNTMAAAALAAPSLGFDRVIGVLVADLSLTDMHVVDVELLGPPGPSGRSFAVHTHRENPAQPGAVTGSATVTAFWHSLLGCCQLTSRPGIHLC.

2 positions are modified to phosphoserine: S24 and S172.

The protein belongs to the L-aspartate dehydrogenase family.

The polypeptide is Aspartate dehydrogenase domain-containing protein (Mus musculus (Mouse)).